Reading from the N-terminus, the 391-residue chain is UDP-N-acetylglucosamine--N-acetylmuramyl-(pentapeptide) pyrophosphoryl-undecaprenol N-acetylglucosamine transferase (391 aa).

UDP-N-acetyl-alpha-D-glucosamine contacts are provided by residues 11 to 13 (TGG), Arg-176, Ser-206, and Gln-312.

The protein belongs to the glycosyltransferase 28 family. MurG subfamily.

Its subcellular location is the cell inner membrane. It catalyses the reaction di-trans,octa-cis-undecaprenyl diphospho-N-acetyl-alpha-D-muramoyl-L-alanyl-D-glutamyl-meso-2,6-diaminopimeloyl-D-alanyl-D-alanine + UDP-N-acetyl-alpha-D-glucosamine = di-trans,octa-cis-undecaprenyl diphospho-[N-acetyl-alpha-D-glucosaminyl-(1-&gt;4)]-N-acetyl-alpha-D-muramoyl-L-alanyl-D-glutamyl-meso-2,6-diaminopimeloyl-D-alanyl-D-alanine + UDP + H(+). It functions in the pathway cell wall biogenesis; peptidoglycan biosynthesis. Functionally, cell wall formation. Catalyzes the transfer of a GlcNAc subunit on undecaprenyl-pyrophosphoryl-MurNAc-pentapeptide (lipid intermediate I) to form undecaprenyl-pyrophosphoryl-MurNAc-(pentapeptide)GlcNAc (lipid intermediate II). The polypeptide is UDP-N-acetylglucosamine--N-acetylmuramyl-(pentapeptide) pyrophosphoryl-undecaprenol N-acetylglucosamine transferase (Treponema denticola (strain ATCC 35405 / DSM 14222 / CIP 103919 / JCM 8153 / KCTC 15104)).